A 196-amino-acid polypeptide reads, in one-letter code: Imidazole glycerol phosphate synthase subunit HisH (196 aa).

In terms of domain architecture, Glutamine amidotransferase type-1 spans 2 to 196 (KVAVVKYNAG…ERVLRNFLDL (195 aa)). The active-site Nucleophile is the C77. Catalysis depends on residues H178 and E180.

As to quaternary structure, heterodimer of HisH and HisF.

The protein resides in the cytoplasm. It carries out the reaction 5-[(5-phospho-1-deoxy-D-ribulos-1-ylimino)methylamino]-1-(5-phospho-beta-D-ribosyl)imidazole-4-carboxamide + L-glutamine = D-erythro-1-(imidazol-4-yl)glycerol 3-phosphate + 5-amino-1-(5-phospho-beta-D-ribosyl)imidazole-4-carboxamide + L-glutamate + H(+). It catalyses the reaction L-glutamine + H2O = L-glutamate + NH4(+). Its pathway is amino-acid biosynthesis; L-histidine biosynthesis; L-histidine from 5-phospho-alpha-D-ribose 1-diphosphate: step 5/9. Its function is as follows. IGPS catalyzes the conversion of PRFAR and glutamine to IGP, AICAR and glutamate. The HisH subunit catalyzes the hydrolysis of glutamine to glutamate and ammonia as part of the synthesis of IGP and AICAR. The resulting ammonia molecule is channeled to the active site of HisF. The chain is Imidazole glycerol phosphate synthase subunit HisH from Bacteroides thetaiotaomicron (strain ATCC 29148 / DSM 2079 / JCM 5827 / CCUG 10774 / NCTC 10582 / VPI-5482 / E50).